Here is a 274-residue protein sequence, read N- to C-terminus: Probable glycerophosphodiester phosphodiesterase 1 (274 aa).

The 253-residue stretch at 12–264 folds into the GP-PDE domain; sequence PFVVAHRGAS…HHPGRTKAWL (253 aa). H17 serves as the catalytic Proton acceptor. 2 residues coordinate Ca(2+): E44 and D46. The active-site Proton donor is H59. E126 is a binding site for Ca(2+).

This sequence belongs to the glycerophosphoryl diester phosphodiesterase family. Requires Ca(2+) as cofactor.

The catalysed reaction is a sn-glycero-3-phosphodiester + H2O = an alcohol + sn-glycerol 3-phosphate + H(+). In terms of biological role, glycerophosphodiester phosphodiesterase hydrolyzes glycerophosphodiesters into glycerol-3-phosphate (G3P) and the corresponding alcohol. The polypeptide is Probable glycerophosphodiester phosphodiesterase 1 (glpQ1) (Mycobacterium tuberculosis (strain CDC 1551 / Oshkosh)).